The sequence spans 126 residues: DNA-directed RNA polymerase subunit omega (126 aa).

Belongs to the RNA polymerase subunit omega family. The RNAP catalytic core consists of 2 alpha, 1 beta, 1 beta' and 1 omega subunit. When a sigma factor is associated with the core the holoenzyme is formed, which can initiate transcription.

The enzyme catalyses RNA(n) + a ribonucleoside 5'-triphosphate = RNA(n+1) + diphosphate. Promotes RNA polymerase assembly. Latches the N- and C-terminal regions of the beta' subunit thereby facilitating its interaction with the beta and alpha subunits. The polypeptide is DNA-directed RNA polymerase subunit omega (Paramagnetospirillum magneticum (strain ATCC 700264 / AMB-1) (Magnetospirillum magneticum)).